A 178-amino-acid chain; its full sequence is MGDPRRLGKKYDTPNHPWIGERIQKEREISHKYGLVNKKELWKMETQLRNYRRQARKLISDTTTQGGKEAVQLFNVLKRYAILVEQEPTLDHILSLNIESILERRLQTLVYRKGLAKTAKQARQLIVHGHIAVNGRRVTSPSYLVSVSENNAIGYVPNSPMALENHPERTTAVSEENQ.

An S4 RNA-binding domain is found at 104–166 (RRLQTLVYRK…PNSPMALENH (63 aa)).

Belongs to the universal ribosomal protein uS4 family. In terms of assembly, part of the 30S ribosomal subunit. Contacts protein S5. The interaction surface between S4 and S5 is involved in control of translational fidelity.

In terms of biological role, one of the primary rRNA binding proteins, it binds directly to 16S rRNA where it nucleates assembly of the body of the 30S subunit. With S5 and S12 plays an important role in translational accuracy. This chain is Small ribosomal subunit protein uS4, found in Methanococcus vannielii (strain ATCC 35089 / DSM 1224 / JCM 13029 / OCM 148 / SB).